The sequence spans 307 residues: Small ribosomal subunit biogenesis GTPase RsgA (307 aa).

The tract at residues 1–20 is disordered; the sequence is MPSEHPFSDGISTPNPKETM. Residues 10–20 are compositionally biased toward polar residues; the sequence is GISTPNPKETM. The 158-residue stretch at 85–242 folds into the CP-type G domain; the sequence is RQDAWKTKLI…LIDSPGLQEF (158 aa). GTP is bound by residues 135–138 and 184–192; these read NKAD and GQSGMGKST. The Zn(2+) site is built by Cys-266, Cys-271, His-273, and Cys-279.

This sequence belongs to the TRAFAC class YlqF/YawG GTPase family. RsgA subfamily. Monomer. Associates with 30S ribosomal subunit, binds 16S rRNA. Requires Zn(2+) as cofactor.

The protein localises to the cytoplasm. One of several proteins that assist in the late maturation steps of the functional core of the 30S ribosomal subunit. Helps release RbfA from mature subunits. May play a role in the assembly of ribosomal proteins into the subunit. Circularly permuted GTPase that catalyzes slow GTP hydrolysis, GTPase activity is stimulated by the 30S ribosomal subunit. In Neisseria meningitidis serogroup A / serotype 4A (strain DSM 15465 / Z2491), this protein is Small ribosomal subunit biogenesis GTPase RsgA.